A 266-amino-acid chain; its full sequence is Proteasome subunit alpha type-1 (266 aa).

The disordered stretch occupies residues 235–266 (DGFKTRPEDIPAVADNEEDDDELHEQPPDVEE). The segment covering 249 to 266 (DNEEDDDELHEQPPDVEE) has biased composition (acidic residues).

Belongs to the peptidase T1A family. In terms of assembly, the 26S proteasome consists of a 20S proteasome core and two 19S regulatory subunits. The 20S proteasome core is composed of 28 subunits that are arranged in four stacked rings, resulting in a barrel-shaped structure. The two end rings are each formed by seven alpha subunits, and the two central rings are each formed by seven beta subunits. The catalytic chamber with the active sites is on the inside of the barrel.

The protein localises to the cytoplasm. It localises to the nucleus. The proteasome is a multicatalytic proteinase complex which is characterized by its ability to cleave peptides with Arg, Phe, Tyr, Leu, and Glu adjacent to the leaving group at neutral or slightly basic pH. The proteasome has an ATP-dependent proteolytic activity. The protein is Proteasome subunit alpha type-1 of Trypanosoma brucei rhodesiense.